The sequence spans 983 residues: Importin beta-like protein kap113 (983 aa).

An Importin N-terminal domain is found at 24-96 (AEGHLNNWKK…RCNALLGSIK (73 aa)).

Belongs to the importin beta family.

It is found in the nucleus. Functions as a component of the nuclear pore complex (NPC). NPC components, collectively referred to as nucleoporins (NUPs), can play the role of both NPC structural components and of docking or interaction partners for transiently associated nuclear transport factors. Active directional transport is assured by both, a Phe-Gly (FG) repeat affinity gradient for these transport factors across the NPC and a transport cofactor concentration gradient across the nuclear envelope. Involved in the export of mRNA from the nucleus to the cytoplasm. May play a role in mitotic spindle formation and/or function. The chain is Importin beta-like protein kap113 (kap113) from Schizosaccharomyces pombe (strain 972 / ATCC 24843) (Fission yeast).